A 44-amino-acid chain; its full sequence is pyr operon leader peptide (44 aa).

This Shigella flexneri protein is pyr operon leader peptide (pyrL).